Reading from the N-terminus, the 316-residue chain is NAC domain-containing protein 2 (316 aa).

The NAC domain maps to 17–170; sequence LPPGFRFHPT…DWVLCRLYNK (154 aa). A DNA-binding region spans residues 114–176; that stretch reads LGIKKALVFY…LYNKKNEWEK (63 aa). A disordered region spans residues 185 to 210; it reads EEASDMVTSQSHSHTHSWGETRTPES. Residues 190-200 are compositionally biased toward polar residues; it reads MVTSQSHSHTH.

Forms homodimer. Interacts with NAC071. As to expression, expressed in roots and stamens.

It localises to the nucleus. Transcription factor that possesses transactivation activity. Transcription activator involved in response to abiotic stresses. Plays a positive role during dehydration and salt stress. Binds specifically to the 5'-CATGTG-3' motif found in promoters of stress-responsive genes. The sequence is that of NAC domain-containing protein 2 from Oryza sativa subsp. japonica (Rice).